Consider the following 368-residue polypeptide: Phospho-N-acetylmuramoyl-pentapeptide-transferase (368 aa).

9 helical membrane passes run 30 to 50, 72 to 92, 95 to 115, 139 to 159, 169 to 189, 208 to 228, 238 to 258, 264 to 286, and 345 to 365; these read AAAI…IKYL, LPTM…LLWS, IDPH…IGFI, VTLG…SVLL, YLTI…ITAV, AIVV…VYAV, GGEI…FLWF, EIIM…ALLI, and KIVI…LMTL.

Belongs to the glycosyltransferase 4 family. MraY subfamily. The cofactor is Mg(2+).

It is found in the cell inner membrane. It catalyses the reaction UDP-N-acetyl-alpha-D-muramoyl-L-alanyl-gamma-D-glutamyl-meso-2,6-diaminopimeloyl-D-alanyl-D-alanine + di-trans,octa-cis-undecaprenyl phosphate = di-trans,octa-cis-undecaprenyl diphospho-N-acetyl-alpha-D-muramoyl-L-alanyl-D-glutamyl-meso-2,6-diaminopimeloyl-D-alanyl-D-alanine + UMP. Its pathway is cell wall biogenesis; peptidoglycan biosynthesis. In terms of biological role, catalyzes the initial step of the lipid cycle reactions in the biosynthesis of the cell wall peptidoglycan: transfers peptidoglycan precursor phospho-MurNAc-pentapeptide from UDP-MurNAc-pentapeptide onto the lipid carrier undecaprenyl phosphate, yielding undecaprenyl-pyrophosphoryl-MurNAc-pentapeptide, known as lipid I. This Pelodictyon phaeoclathratiforme (strain DSM 5477 / BU-1) protein is Phospho-N-acetylmuramoyl-pentapeptide-transferase.